The primary structure comprises 193 residues: Peptidyl-tRNA hydrolase (193 aa).

TRNA is bound at residue tyrosine 17. Histidine 22 functions as the Proton acceptor in the catalytic mechanism. The tRNA site is built by tyrosine 68, asparagine 70, and asparagine 116.

It belongs to the PTH family. In terms of assembly, monomer.

It is found in the cytoplasm. The catalysed reaction is an N-acyl-L-alpha-aminoacyl-tRNA + H2O = an N-acyl-L-amino acid + a tRNA + H(+). Hydrolyzes ribosome-free peptidyl-tRNAs (with 1 or more amino acids incorporated), which drop off the ribosome during protein synthesis, or as a result of ribosome stalling. Its function is as follows. Catalyzes the release of premature peptidyl moieties from peptidyl-tRNA molecules trapped in stalled 50S ribosomal subunits, and thus maintains levels of free tRNAs and 50S ribosomes. The chain is Peptidyl-tRNA hydrolase from Acinetobacter baumannii (strain AB0057).